The primary structure comprises 1028 residues: MDLNGDAGAKRKRSSITTPAERPVKHLRPESSALTPGDSTPANGTVYDVEDDEDASRLLPVGPAQADSPEWQATIEEVVKSVVSIHFCQTCSFDTELSMSSQATGFVVDAENGYILTNRHVVCPGPFWGYCIFDNHEECDVRPVYRDPVHDFGILKFDPKAIRYMKLRELKLQPDAAKVGSEIRVVGNDAGEKLSILSGVISRLDRNAPEYGDGYSDFNTNYIQAAAAASGGSSGSPVVNIDGHAIALQAGGRADGAATDYFLPLDRPLRALECIRRGEPVTRGTIQTQWILKPFDECRRLGLTPEWEATVRKAAPTETSMLVAEIILPEGPADGKLEEGDVLLQVNGVLLTQFIRLDDILDSSVGQTVRLLVQRGGQNVEIECQVGDLHAITPDRFVTVAGGTFHNLSYQQSRLYAIATRGVYVCEAAGSFKLENTLSGWIIDSVDKRPTRNLDEFVEVMRTIPDRSRVVISYRHIRDLHTRGTSIVYIDRHWHPKMRLAVRNDDTGLWDFSDLADPIPALPPVPRKADFIQLDGVSQPAAADIVRSFVRVSCTMPLKLDGYPQAKKTGFGLVVDAEKGLVVVSRAIVPYDLCDINVTVADSIIVNAKVVFLHPLQNYSIIQYDPSLVQAPVQSAKLATDYIKQGQDTIFVGFNQNFRIVVAKTAVTDITTVSIPANASAPRYRAINLDAITVDTGLSGQCSNGVLIGEDGVVQALWLNYLGERTSNSHKDVEYHLGFATPSLLPVLSKVQQGEMPELRILNMESYVVQMSQARIMGVSEEWIEKVTQANPSRHQLFMVRKVDCPPPGFNSAADTFEEGDIILTLDGQLITRVSELDIMYEKDTLEALIVRNGQEMRIQVPTVPTEDLETDRAVVFCGAVLQKPHHAVRQQISKLHSEVYVSARSRGSPSYQYGLAPTNFITAVNGVPTPNLDRFSEEVSKIPDNTYFRLRAVTFDNVPWVVTVKKNDHYFPMSEYIKDQSQPSGWRTVSHDKDKYKDGIAPDAANLNPDAMDEGFDGVSDIEPDLE.

The interval 1–49 (MDLNGDAGAKRKRSSITTPAERPVKHLRPESSALTPGDSTPANGTVYDV) is disordered. The span at 32–43 (SALTPGDSTPAN) shows a compositional bias: polar residues. The tract at residues 82–266 (VVSIHFCQTC…AATDYFLPLD (185 aa)) is serine protease. Active-site charge relay system residues include His120, Asp151, and Ser233. 2 consecutive PDZ domains span residues 289-374 (QWIL…LLVQ) and 876-957 (VFCG…VTFD). The tract at residues 983–1028 (QPSGWRTVSHDKDKYKDGIAPDAANLNPDAMDEGFDGVSDIEPDLE) is disordered. Positions 990–1001 (VSHDKDKYKDGI) are enriched in basic and acidic residues. Positions 1012-1028 (AMDEGFDGVSDIEPDLE) are enriched in acidic residues.

It belongs to the peptidase S1C family.

It is found in the nucleus. Functionally, nuclear serine protease which mediates apoptosis. This Aspergillus niger (strain ATCC MYA-4892 / CBS 513.88 / FGSC A1513) protein is Pro-apoptotic serine protease nma111 (nma111).